Consider the following 799-residue polypeptide: Elongation factor G, mitochondrial (799 aa).

The N-terminal 24 residues, 1 to 24, are a transit peptide targeting the mitochondrion; it reads MRCPSLARLPHRAVSGLTRTPVRF. Residues 97 to 384 form the tr-type G domain; it reads SRVRNIGIAA…GVIDYLPNPS (288 aa). Residues 106 to 113, 182 to 186, and 236 to 239 contribute to the GTP site; these read AHIDSGKT, DTPGH, and NKMD.

This sequence belongs to the TRAFAC class translation factor GTPase superfamily. Classic translation factor GTPase family. EF-G/EF-2 subfamily.

Its subcellular location is the mitochondrion. Its pathway is protein biosynthesis; polypeptide chain elongation. Mitochondrial GTPase that catalyzes the GTP-dependent ribosomal translocation step during translation elongation. During this step, the ribosome changes from the pre-translocational (PRE) to the post-translocational (POST) state as the newly formed A-site-bound peptidyl-tRNA and P-site-bound deacylated tRNA move to the P and E sites, respectively. Catalyzes the coordinated movement of the two tRNA molecules, the mRNA and conformational changes in the ribosome. The chain is Elongation factor G, mitochondrial (mef1) from Emericella nidulans (strain FGSC A4 / ATCC 38163 / CBS 112.46 / NRRL 194 / M139) (Aspergillus nidulans).